The following is a 236-amino-acid chain: Purine nucleoside phosphorylase DeoD-type 2 (236 aa).

An a purine D-ribonucleoside-binding site is contributed by His-5. Phosphate-binding positions include Gly-21, Arg-25, Arg-44, and 88-91; that span reads RVGS. A purine D-ribonucleoside contacts are provided by residues 180–182 and 204–205; these read DME and SD. The active-site Proton donor is Asp-205.

Belongs to the PNP/UDP phosphorylase family. In terms of assembly, homohexamer; trimer of homodimers.

It catalyses the reaction a purine D-ribonucleoside + phosphate = a purine nucleobase + alpha-D-ribose 1-phosphate. The catalysed reaction is a purine 2'-deoxy-D-ribonucleoside + phosphate = a purine nucleobase + 2-deoxy-alpha-D-ribose 1-phosphate. Functionally, catalyzes the reversible phosphorolytic breakdown of the N-glycosidic bond in the beta-(deoxy)ribonucleoside molecules, with the formation of the corresponding free purine bases and pentose-1-phosphate. The sequence is that of Purine nucleoside phosphorylase DeoD-type 2 from Vibrio parahaemolyticus serotype O3:K6 (strain RIMD 2210633).